The chain runs to 2138 residues: Protein virilizer homolog (2138 aa).

5 disordered regions span residues 1503–1574 (RLPQ…SMHV), 1638–1664 (NPTP…DDLQ), 1855–1881 (PVIP…SSGG), 2013–2035 (PMQP…QGVS), and 2058–2094 (YYHP…QESG). Over residues 1528–1541 (ENSSVDIPTQNSIQ) the composition is skewed to polar residues. Composition is skewed to polar residues over residues 1862 to 1881 (DSLS…SSGG) and 2025 to 2035 (QISQPSEQGVS).

The protein belongs to the vir family. In terms of assembly, interacts with MTB, FIP37 and HAKAI. Associates with MTA, MTB, FIP37 and HAKAI to form the m6A writer complex which is essential for adenosine methylation at specific mRNA sequences.

The protein resides in the nucleus speckle. The protein localises to the nucleus. It localises to the nucleoplasm. Its function is as follows. Subunit of the N6-methyltransferase complex, a multiprotein complex that mediates N6-methyladenosine (m6A) methylation at the 5'-[AG]GAC-3' consensus sites of some mRNAs. Associates with MTA, MTB, FIP37 and HAKAI to form the m6A writer complex which is essential for adenosine methylation at specific mRNA sequences. N6-methyladenosine (m6A) plays a role in mRNA stability, processing, translation efficiency and editing. This is Protein virilizer homolog from Arabidopsis thaliana (Mouse-ear cress).